The chain runs to 1159 residues: ATP-dependent helicase/deoxyribonuclease subunit B (1159 aa).

Belongs to the helicase family. AddB/RexB type 2 subfamily. Heterodimer of AddA and RexB. Mg(2+) serves as cofactor.

In terms of biological role, the heterodimer acts as both an ATP-dependent DNA helicase and an ATP-dependent, dual-direction single-stranded exonuclease. Recognizes the chi site generating a DNA molecule suitable for the initiation of homologous recombination. This subunit has 5' -&gt; 3' nuclease activity but not helicase activity. This Leuconostoc mesenteroides subsp. mesenteroides (strain ATCC 8293 / DSM 20343 / BCRC 11652 / CCM 1803 / JCM 6124 / NCDO 523 / NBRC 100496 / NCIMB 8023 / NCTC 12954 / NRRL B-1118 / 37Y) protein is ATP-dependent helicase/deoxyribonuclease subunit B.